Reading from the N-terminus, the 378-residue chain is Phospho-N-acetylmuramoyl-pentapeptide-transferase (378 aa).

The next 10 helical transmembrane spans lie at 27–47 (TAFA…WLIN), 74–94 (TMGG…WADL), 96–116 (YPYV…GFLD), 135–155 (LVYQ…MRAY), 184–204 (WTYV…VVFY), 216–236 (GLAI…AYAG), 256–276 (LTIF…YNAH), 280–300 (IFMG…VAVL), 305–325 (ILLL…ILQV), and 355–375 (KIIA…LTTL).

It belongs to the glycosyltransferase 4 family. MraY subfamily. Requires Mg(2+) as cofactor.

The protein localises to the cell inner membrane. The enzyme catalyses UDP-N-acetyl-alpha-D-muramoyl-L-alanyl-gamma-D-glutamyl-meso-2,6-diaminopimeloyl-D-alanyl-D-alanine + di-trans,octa-cis-undecaprenyl phosphate = di-trans,octa-cis-undecaprenyl diphospho-N-acetyl-alpha-D-muramoyl-L-alanyl-D-glutamyl-meso-2,6-diaminopimeloyl-D-alanyl-D-alanine + UMP. It participates in cell wall biogenesis; peptidoglycan biosynthesis. Its function is as follows. Catalyzes the initial step of the lipid cycle reactions in the biosynthesis of the cell wall peptidoglycan: transfers peptidoglycan precursor phospho-MurNAc-pentapeptide from UDP-MurNAc-pentapeptide onto the lipid carrier undecaprenyl phosphate, yielding undecaprenyl-pyrophosphoryl-MurNAc-pentapeptide, known as lipid I. This is Phospho-N-acetylmuramoyl-pentapeptide-transferase from Solibacter usitatus (strain Ellin6076).